The following is a 793-amino-acid chain: E3 UFM1-protein ligase 1 (793 aa).

A2 is subject to N-acetylalanine. The interval 2–200 is mediates interaction with DDRGK1; that stretch reads ADAWEEIRRL…RGLFSAITRP (199 aa). Residues 2-212 form a required for E3 UFM1-protein ligase activity region; the sequence is ADAWEEIRRL…VNSLVSKYGF (211 aa). The tract at residues 121–250 is involved in CDK5RAP3-binding; it reads DQLSEEVNDK…KAVFVPDIYS (130 aa). The segment at 200-400 is mediates interaction with TRIP4; the sequence is PTPVNSLVSK…NPVHLITEED (201 aa). The tract at residues 410–473 is disordered; the sequence is VNTSKKDKKD…SSHGGKKKPD (64 aa). R433 carries the post-translational modification Omega-N-methylarginine. Residues S458 and S462 each carry the phosphoserine modification. The mediates interaction with CDK5RAP3 stretch occupies residues 490 to 683; sequence IQDAPEEFIS…QLKVTEDPAL (194 aa). Position 535 is a phosphothreonine (T535). Residues 742–765 form a disordered region; it reads NKKTGQGEDPSSDELDKEQHDVTN. 2 positions are modified to phosphoserine: S752 and S753.

Belongs to the UFL1 family. Catalytic component of the UFM1 ribosome E3 ligase (UREL) complex, composed of UFL1, DDRGK1 and CDK5RAP3. Interacts with E2-like enzyme UFC1. Interacts with RELA. Interacts with NBN; promoting recruitment to double-strand breaks following DNA damage. Interacts (when phosphorylated) with YWHAG/14-3-3-gamma; sequestering UFL1 and preventing its association with PDCD1/PD-1 substrate. Ubiquitinated, leading to its degradation by the proteasome. Interaction with CDK5RAP3 protects both proteins against ubiquitination and degradation via the proteasome. In terms of processing, phosphorylated at Ser-462 by ATM, enhancing protein ligase activity and promoting ATM activation in a positive feedback loop. Phosphorylation at Thr-535 by AMPK promotes its interaction with YWHAG/14-3-3-gamma, thereby preventing UFL1 association with PDCD1/PD-1 substrate. As to expression, ubiquitously expressed with higher expression in pancreatic islets and other secretory tissues. In the embryonic brain at 17 dpc, detected in Sox2-positive neural stem cells and in Slc1a3/GLAST-positive radial glia. In perinatal brain, highly expressed in Slc1a3-positive Bergmann glia of the cerebellum. Continues to be expressed in Bergmann glia of adult brain at 16 weeks. Expressed in adult heart. Highly expressed in the intestinal exocrine cells.

The protein localises to the endoplasmic reticulum membrane. It localises to the cytoplasm. Its subcellular location is the cytosol. It is found in the nucleus. The protein resides in the chromosome. In terms of biological role, E3 protein ligase that mediates ufmylation, the covalent attachment of the ubiquitin-like modifier UFM1 to lysine residues on target proteins, and which plays a key role in various processes, such as ribosome recycling, response to DNA damage, interferon response or reticulophagy (also called ER-phagy). Catalyzes ufmylation of many protein, such as CD274/PD-L1, CDK5RAP3, CYB5R3, DDRGK1, EIF6, histone H4, MRE11, P4HB, PDCD1/PD-1, TRIP4, RPN1, RPS20/uS10, RPL10/uL16, RPL26/uL24, SYVN1/HRD1 and TP53/p53. As part of the UREL complex, plays a key role in ribosome recycling by catalyzing mono-ufmylation of RPL26/uL24 subunit of the 60S ribosome. Ufmylation of RPL26/uL24 occurs on free 60S ribosomes following ribosome dissociation: it weakens the junction between post-termination 60S subunits and SEC61 translocons, promoting release and recycling of the large ribosomal subunit from the endoplasmic reticulum membrane. Ufmylation of RPL26/uL24 and subsequent 60S ribosome recycling either take place after normal termination of translation or after ribosome stalling during cotranslational translocation at the endoplasmic reticulum. Involved in reticulophagy in response to endoplasmic reticulum stress by mediating ufmylation of proteins such as CYB5R3 and RPN1, thereby promoting lysosomal degradation of ufmylated proteins. Ufmylation in response to endoplasmic reticulum stress is essential for processes such as hematopoiesis, blood vessel morphogenesis or inflammatory response. Mediates ufmylation of DDRGK1 and CDK5RAP3; the role of these modifications is however unclear: as both DDRGK1 and CDK5RAP3 act as substrate adapters for ufmylation, it is uncertain whether ufmylation of these proteins is a collateral effect or is required for ufmylation. Acts as a negative regulator of T-cell activation by mediating ufmylation and stabilization of PDCD1/PD-1. Also involved in the response to DNA damage: recruited to double-strand break sites following DNA damage and mediates monoufmylation of histone H4 and ufmylation of MRE11. Mediates ufmylation of TP53/p53, promoting its stability. Catalyzes ufmylation of TRIP4, thereby playing a role in nuclear receptor-mediated transcription. Required for hematopoietic stem cell function and hematopoiesis. The protein is E3 UFM1-protein ligase 1 of Mus musculus (Mouse).